The following is a 249-amino-acid chain: Long form salivary protein D7L (249 aa).

Residues 1–19 (MNAVITSLVFISLVGVGYS) form the signal peptide. Intrachain disulfides connect cysteine 36-cysteine 66 and cysteine 62-cysteine 112. Position 49 (tryptophan 49) interacts with thromboxane A2. Tryptophan 52 lines the leukotriene C4 pocket. Tyrosine 63 lines the thromboxane A2 pocket. 2 residues coordinate leukotriene C4: glycine 136 and lysine 154. Lysine 154 provides a ligand contact to thromboxane A2. Intrachain disulfides connect cysteine 162/cysteine 178, cysteine 174/cysteine 221, and cysteine 211/cysteine 230.

It belongs to the PBP/GOBP family.

Its subcellular location is the secreted. Its function is as follows. Modulates blood feeding of female sandflies on vertebrate species by binding and sequestering different mediators involved in the host response. Binds leukotriene C4, leukotriene D4, leukotriene E4 and U-46619, a stable analog of thromboxane A2. Does not bind histamine or serotonin. Inhibits platelet aggregation induced by low concentrations of collagen in thromboxane A2-dependent manner. The chain is Long form salivary protein D7L from Phlebotomus duboscqi (Sandfly).